The chain runs to 734 residues: Predicted GPI-anchored protein 49 (734 aa).

The N-terminal stretch at 1–16 (MNYITSLLLLSSNTFL) is a signal peptide. Asn-27, Asn-56, Asn-68, and Asn-71 each carry an N-linked (GlcNAc...) asparagine glycan. Positions 78–145 (DNSDTDIDDS…NESDTQNEND (68 aa)) are disordered. Residues 87–98 (SSSNSEDVSSND) are compositionally biased toward low complexity. Asn-105, Asn-118, Asn-136, and Asn-180 each carry an N-linked (GlcNAc...) asparagine glycan. A compositionally biased stretch (acidic residues) spans 110–129 (FSDESDEGNDSDDNGDEVEN). Positions 130–141 (MENNQANESDTQ) are enriched in polar residues. Disordered regions lie at residues 216 to 262 (SPKS…LKSK) and 331 to 360 (DANPTEEYDSGDGKENTQQNPIPEKMRLPT). A compositionally biased stretch (basic residues) spans 228-259 (SRKKTLKSKSKSKSSKLKHKSRKSHKRRPKLL). Residues Asn-388 and Asn-427 are each glycosylated (N-linked (GlcNAc...) asparagine). The interval 447–479 (PPRYSNHHSEFTVERPPRPSRTKKRPRIKAKKT) is disordered. Positions 453-463 (HHSEFTVERPP) are enriched in basic and acidic residues. The span at 464–479 (RPSRTKKRPRIKAKKT) shows a compositional bias: basic residues. Residue Asn-517 is glycosylated (N-linked (GlcNAc...) asparagine). The tract at residues 582-653 (KPQETKLHSP…STTSTKPNDQ (72 aa)) is disordered. The span at 592-611 (TSTDTKSSKLMSSSSSNNNK) shows a compositional bias: low complexity. Residues 620–631 (EYNQTQESTSYN) show a composition bias toward polar residues. N-linked (GlcNAc...) asparagine glycans are attached at residues Asn-622 and Asn-631. Over residues 632-650 (TTKAVPKTSVVSSTTSTKP) the composition is skewed to low complexity. A lipid anchor (GPI-anchor amidated serine) is attached at Ser-707. Residues 708-734 (ASQNLSFSVLGLIILLLLLPGLLIIIM) constitute a propeptide, removed in mature form. An N-linked (GlcNAc...) asparagine glycan is attached at Asn-711.

The protein localises to the cell membrane. The protein is Predicted GPI-anchored protein 49 (PGA49) of Candida albicans (strain SC5314 / ATCC MYA-2876) (Yeast).